A 296-amino-acid chain; its full sequence is uncharacterized protein (296 aa).

6 consecutive transmembrane segments (helical) span residues 1–21 (MVNL…IFDY), 30–50 (LITA…GFWL), 71–91 (FISF…FVLC), 92–112 (LAQL…STLA), 113–133 (IGLA…LVLF), and 142–162 (IEVA…TTIC).

Belongs to the MscS (TC 1.A.23) family.

Its subcellular location is the cell membrane. This is an uncharacterized protein from Synechocystis sp. (strain ATCC 27184 / PCC 6803 / Kazusa).